A 317-amino-acid chain; its full sequence is N-acetylmuramoyl-L-alanine amidase XlyB (317 aa).

A signal peptide spans Met1 to Ala39. Residues Ala40–His142 enclose the N-acetylmuramoyl-L-alanine amidase domain. Residues Ser177–Leu221 enclose the LysM domain.

It belongs to the N-acetylmuramoyl-L-alanine amidase 2 family.

Its subcellular location is the secreted. It carries out the reaction Hydrolyzes the link between N-acetylmuramoyl residues and L-amino acid residues in certain cell-wall glycopeptides.. Autolysins are involved in some important biological processes such as cell separation, cell-wall turnover, competence for genetic transformation, formation of the flagella and sporulation. This Bacillus subtilis (strain 168) protein is N-acetylmuramoyl-L-alanine amidase XlyB (xlyB).